The chain runs to 402 residues: Serine/threonine-protein phosphatase 4 regulatory subunit 2 (402 aa).

Positions 258-402 are disordered; that stretch reads NEDQDDENTG…FSKRNKASES (145 aa). The span at 266 to 277 shows a compositional bias: polar residues; the sequence is TGFSNQVINDNN. Positions 278–319 are enriched in acidic residues; it reads DSQEDDDEDSDYIEEDEGDEDEDDDDDEEEEEEEDGDEDEDE. Residues 320–337 show a composition bias toward basic and acidic residues; the sequence is DKHFDIKVEEEAVKEDAN. Positions 345–358 are enriched in low complexity; it reads NVSNNSDDSSLQND.

It belongs to the PPP4R2 family. Regulatory subunit (R2) of the histone H2A phosphatase complex (HTP-C) consisting of PPH3, PSY2 and PSY4.

The protein resides in the nucleus. In terms of biological role, regulatory subunit of the histone H2A phosphatase complex, which dephosphorylates H2AS128ph (gamma-H2A) that has been displaced from sites of DNA lesions in the double-stranded DNA break repair process. Dephosphorylation is necessary for efficient recovery from the DNA damage checkpoint. In Candida glabrata (strain ATCC 2001 / BCRC 20586 / JCM 3761 / NBRC 0622 / NRRL Y-65 / CBS 138) (Yeast), this protein is Serine/threonine-protein phosphatase 4 regulatory subunit 2 (PSY4).